The following is a 1041-amino-acid chain: Serine-repeat antigen protein 6 (1041 aa).

Positions 1–34 are cleaved as a signal peptide; sequence MIFFNFKLNRMICPIFFLYIINVLFTQYFIKCEG. Asn-84 carries an N-linked (GlcNAc...) asparagine glycan. Residues 101 to 111 show a composition bias toward low complexity; sequence KVVSSSESGKG. Residues 101-173 form a disordered region; that stretch reads KVVSSSESGK…TESSSETLNK (73 aa). Polar residues predominate over residues 114 to 149; that stretch reads VSHTKVTSEGLSDTQPNVTQSVSSSTHTPGSLDSTM. N-linked (GlcNAc...) asparagine glycosylation occurs at Asn-130. Residues 150–168 show a composition bias toward low complexity; the sequence is STEQHSSVSQSSLPTESSS. A glycan (N-linked (GlcNAc...) asparagine) is linked at Asn-459. Residues 500–577 form a disordered region; that stretch reads TLPSESPSES…GDTNYVYDFD (78 aa). Low complexity predominate over residues 502–515; the sequence is PSESPSESSSKSDS. Residues 521–545 show a composition bias toward basic and acidic residues; sequence NDKDKNEDKDDMSKNSKEEFKNDDK. Asn-554 is a glycosylation site (N-linked (GlcNAc...) asparagine). Over residues 564–574 the composition is skewed to low complexity; it reads NINNGDTNYVY. Residue Asn-583 is glycosylated (N-linked (GlcNAc...) asparagine). Residue Cys-654 is part of the active site. N-linked (GlcNAc...) asparagine glycosylation is present at Asn-684. Residues His-820 and Asn-845 contribute to the active site. A glycan (N-linked (GlcNAc...) asparagine) is linked at Asn-984.

Belongs to the peptidase C1 family. In terms of processing, just prior to merozoite egress from host erythrocytes, proteolytically cleaved by SUB1 to generate the active 75kDa form.

Its subcellular location is the parasitophorous vacuole lumen. The protein resides in the parasitophorous vacuole membrane. Functionally, cysteine protease which plays an essential role in merozoite egress from host erythrocytes. May cleave host SPTB/beta spectrin and ANK1/ankyrin-1 which disrupts host erythrocyte actin cytoskeleton and leads to host erythrocyte cell membrane rupture. In Plasmodium falciparum, this protein is Serine-repeat antigen protein 6.